The following is a 148-amino-acid chain: MGKQLRQMKIKEILHNHDVGNQNDLIRLLDKAGIEVAQATLSRDCTELGIIRSRTHQGFRLVLPEDSPGQIIRGLVGMEVQSISSNETAIVIKTLPGRAHGVASFLDQLKDIAILGTIAGDDTVLVIPLSIKDIASIIHDIQSNLSQT.

The protein belongs to the ArgR family.

The protein localises to the cytoplasm. Its pathway is amino-acid biosynthesis; L-arginine biosynthesis [regulation]. Functionally, regulates arginine biosynthesis genes. In Prosthecochloris aestuarii (strain DSM 271 / SK 413), this protein is Arginine repressor.